A 479-amino-acid chain; its full sequence is Sodium-coupled neutral amino acid transporter 5 (479 aa).

Residues 1–61 (MAISCAVGME…LDFEGKTSFG (61 aa)) lie on the Cytoplasmic side of the membrane. Residues 62-84 (MSVFNLSNAIMGSGILGLAYAMA) form a helical membrane-spanning segment. The Extracellular portion of the chain corresponds to 85 to 97 (HTGVIFFLALLLC). Residues 98 to 118 (IALLSSYSIHLLLTCASVVGI) form a helical membrane-spanning segment. Residues 119 to 135 (RAYEQLGQRAFGPAGKV) are Cytoplasmic-facing. The helical transmembrane segment at 136 to 156 (VVAIIICLHNVGAMSSYLFII) threads the bilayer. Residues 157 to 176 (KSELPLVIGTFLHMDPEGDW) are Extracellular-facing. Residues 177-197 (FLKGNLLIILVSLLIILPLAL) traverse the membrane as a helical segment. Residues 198-202 (MKHLG) are Cytoplasmic-facing. A helical membrane pass occupies residues 203 to 223 (YLGYTSSLSLTCMLFFLISVI). The Extracellular portion of the chain corresponds to 224–264 (YKKFQIGCDVSHNDTVVEAEQAPLQAFNSSCEAELFTVDSQ). A disulfide bridge links C231 with C254. A glycan (N-linked (GlcNAc...) asparagine) is linked at N236. A helical transmembrane segment spans residues 265–285 (MSYTVPIMAFAFVCHPEVLPI). Topologically, residues 286-302 (YTELCRPTQRRMQAVAN) are cytoplasmic. A helical transmembrane segment spans residues 303 to 323 (MSIGAMFIMYGLTATFGYLTF). At 324–341 (YSTVKAEMLEMYTQEDML) the chain is on the extracellular side. A helical membrane pass occupies residues 342–362 (ILCVRLAVLLAVTLTVPVVLF). Topologically, residues 363–383 (PIRRALQQLLFPSKAFSWLRH) are cytoplasmic. Residues 384-404 (VAIALILLILVNILVICVPTI) traverse the membrane as a helical segment. At 405-406 (RD) the chain is on the extracellular side. A helical transmembrane segment spans residues 407 to 427 (IFGFIGSTSAPSLIFILPSVF). At 428 to 446 (YLRIVPTEVEPLFSWPKIQ) the chain is on the cytoplasmic side. Residues 447–467 (ALCFGVLGVLFMAISLGFMFA) form a helical membrane-spanning segment. At 468–479 (NWATGQSRMSGH) the chain is on the extracellular side.

Belongs to the amino acid/polyamine transporter 2 family. Expressed in the ganglion cell layer and the nerve fiber layer (at protein level). Also expreseed in the cells of the inner nuclear layer and in the inner plexiform layer (at protein level). Expressed in Mueller and ganglion retinal cell.

It is found in the cell membrane. It carries out the reaction L-glutamine(out) + Na(+)(out) + H(+)(in) = L-glutamine(in) + Na(+)(in) + H(+)(out). It catalyses the reaction L-serine(out) + Na(+)(out) + H(+)(in) = L-serine(in) + Na(+)(in) + H(+)(out). The enzyme catalyses L-alanine(out) + Na(+)(out) + H(+)(in) = L-alanine(in) + Na(+)(in) + H(+)(out). The catalysed reaction is glycine(out) + Na(+)(out) + H(+)(in) = glycine(in) + Na(+)(in) + H(+)(out). It carries out the reaction L-asparagine(out) + Na(+)(out) + H(+)(in) = L-asparagine(in) + Na(+)(in) + H(+)(out). It catalyses the reaction L-histidine(out) + Na(+)(out) + H(+)(in) = L-histidine(in) + Na(+)(in) + H(+)(out). The enzyme catalyses L-cysteine(out) + Na(+)(out) + H(+)(in) = L-cysteine(in) + Na(+)(in) + H(+)(out). Its activity is regulated as follows. Not inhibited by lithium. Partial allosteric regulation on ions sodium binding. Its function is as follows. Symporter that cotransports neutral amino acids and sodium ions, coupled to an H(+) antiporter activity. Releases L-glutamine and glycine from astroglial cells and may participate in the glutamate/GABA-L-glutamine cycle and the NMDA receptors activation. In addition, contributes significantly to L-glutamine uptake in retina, namely in ganglion and Mueller cells therefore, participates in the retinal glutamate-glutamine cycle. The transport activity is pH sensitive, Li(+) tolerant, bidirectional and associated with large uncoupled fluxes of protons. Moreover functions in both direction and is associated with large uncoupled fluxes of protons. The transport is electroneutral coupled to the cotransport of 1 Na(+) and the antiport of 1 H(+). May have a particular importance for modulation of net hepatic glutamine flux. The sequence is that of Sodium-coupled neutral amino acid transporter 5 from Mus musculus (Mouse).